The chain runs to 237 residues: MKREQLYSGKAKTIYATDNPDTLIAEFRNSLTAFNGEKKGEMEKKGYYNAQISKKIFEMLEASGIKTHFVSMLSDIEMLVKKVEIIKIEVIVRNIAAGSITKKYPMKEGTIFESPVLVFDFKSDEYGDPMLNDDIAVALGIATREELATLRKLALRINELLVPYLDEKGILLPDFKLEFGRRDGEIILSDEISCDTCRFWDKKTGQSMDKDVFRFDKGDISKAYEEVARRIVPEIFE.

Belongs to the SAICAR synthetase family.

The catalysed reaction is 5-amino-1-(5-phospho-D-ribosyl)imidazole-4-carboxylate + L-aspartate + ATP = (2S)-2-[5-amino-1-(5-phospho-beta-D-ribosyl)imidazole-4-carboxamido]succinate + ADP + phosphate + 2 H(+). The protein operates within purine metabolism; IMP biosynthesis via de novo pathway; 5-amino-1-(5-phospho-D-ribosyl)imidazole-4-carboxamide from 5-amino-1-(5-phospho-D-ribosyl)imidazole-4-carboxylate: step 1/2. The polypeptide is Phosphoribosylaminoimidazole-succinocarboxamide synthase (Methanosarcina acetivorans (strain ATCC 35395 / DSM 2834 / JCM 12185 / C2A)).